The sequence spans 165 residues: E3 ubiquitin ligase complex SCF subunit sconC (165 aa).

The segment at 106–165 is interaction with the F-box domain of F-box proteins; sequence ILAANYLDIKALLDVGCKTVANMIKGKSPEEIRKTFNIQNDFTPEEEDQIRRENEWAEDR.

Belongs to the SKP1 family. Component of the SCF (SKP1-CUL1-F-box protein) E3 ubiquitin ligase complexes.

It participates in protein modification; protein ubiquitination. Essential component of the SCF (SKP1-CUL1-F-box protein) E3 ubiquitin ligase complexes, which mediate the ubiquitination and subsequent proteasomal degradation of target proteins. Controls sulfur metabolite repression, probably by mediating the inactivation or degradation of the metR transcription factor. This Arthroderma otae (strain ATCC MYA-4605 / CBS 113480) (Microsporum canis) protein is E3 ubiquitin ligase complex SCF subunit sconC (sconC).